A 440-amino-acid polypeptide reads, in one-letter code: Light-independent protochlorophyllide reductase subunit N (440 aa).

Positions 1-24 are disordered; it reads MTCRPALSDSHPPEPGTPSSPSFG. Residues Cys42, Cys67, and Cys128 each coordinate [4Fe-4S] cluster.

This sequence belongs to the BchN/ChlN family. As to quaternary structure, protochlorophyllide reductase is composed of three subunits; BchL, BchN and BchB. Forms a heterotetramer of two BchB and two BchN subunits. The cofactor is [4Fe-4S] cluster.

It catalyses the reaction chlorophyllide a + oxidized 2[4Fe-4S]-[ferredoxin] + 2 ADP + 2 phosphate = protochlorophyllide a + reduced 2[4Fe-4S]-[ferredoxin] + 2 ATP + 2 H2O. It participates in porphyrin-containing compound metabolism; bacteriochlorophyll biosynthesis (light-independent). Its function is as follows. Component of the dark-operative protochlorophyllide reductase (DPOR) that uses Mg-ATP and reduced ferredoxin to reduce ring D of protochlorophyllide (Pchlide) to form chlorophyllide a (Chlide). This reaction is light-independent. The NB-protein (BchN-BchB) is the catalytic component of the complex. This Rhodospirillum rubrum (strain ATCC 11170 / ATH 1.1.1 / DSM 467 / LMG 4362 / NCIMB 8255 / S1) protein is Light-independent protochlorophyllide reductase subunit N.